We begin with the raw amino-acid sequence, 443 residues long: uncharacterized protein (443 aa).

The next 10 membrane-spanning stretches (helical) occupy residues 7–29 (VSLYISFVLIICALSKNIMMLNT), 68–87 (YISSYSYILYTYVLFISIFT), 94–111 (VLSLFLKVIYIYSLYAIF), 121–143 (VTLFTFFILAFLMCSSSTLSMFA), 150–164 (IVIIFLPFLVYSLTC), 179–201 (IISTAKNQFILTPLIVYSYYIFF), 206–225 (LIIKSVICVVCLLASIFAIS), 358–375 (IRFISLLLFFIASIFIRN), 382–399 (LFVVSLFGISQFYVSFFG), and 409–431 (LFGMYFSFDLCLYITVVFLIYKI).

The protein resides in the cell membrane. This is an uncharacterized protein from Escherichia coli (strain K12).